A 132-amino-acid chain; its full sequence is Small ribosomal subunit protein uS8c (132 aa).

It belongs to the universal ribosomal protein uS8 family. Part of the 30S ribosomal subunit.

It is found in the plastid. Its subcellular location is the chloroplast. Functionally, one of the primary rRNA binding proteins, it binds directly to 16S rRNA central domain where it helps coordinate assembly of the platform of the 30S subunit. The sequence is that of Small ribosomal subunit protein uS8c (rps8) from Huperzia lucidula (Shining clubmoss).